We begin with the raw amino-acid sequence, 112 residues long: Protein BEX3 (112 aa).

The disordered stretch occupies residues 1 to 45; it reads MANIHQENEEMEQPVQNGEEDRPLGGGEGHQPERNHRRGQARRLA. Residues 69–94 form an interaction with p75NTR/NGFR region; the sequence is EIFMEEMREIRRKLRELQLRNCLRIL. The interval 69-112 is interaction with 14-3-3 epsilon; the sequence is EIFMEEMREIRRKLRELQLRNCLRILMGELSNHHDHHDEFCLMP. The Nuclear export signal motif lies at 78 to 88; sequence IRRKLRELQLR. The interval 101–105 is his cluster; the sequence is HHDHH. Cys-109 is a Zn(2+) binding site.

This sequence belongs to the BEX family. Self-associates. Binds to the DEATH domain of p75NTR/NGFR. Interacts with 14-3-3 epsilon (YWHAE). Interacts with DIABLO/SMAC. Post-translationally, ubiquitinated. Degraded by the proteasome.

The protein resides in the nucleus. Its subcellular location is the cytoplasm. The protein localises to the cytosol. Its function is as follows. May be a signaling adapter molecule involved in NGFR/p75NTR-mediated apoptosis induced by NGF. Plays a role in zinc-triggered neuronal death. In absence of reductive stress, acts as a pseudosubstrate for the CRL2(FEM1B) complex: associates with FEM1B via zinc, thereby preventing association between FEM1B and its substrates. This Bos taurus (Bovine) protein is Protein BEX3.